Reading from the N-terminus, the 949-residue chain is Isoleucine--tRNA ligase (949 aa).

Residues 58-68 carry the 'HIGH' region motif; the sequence is PYANGDIHIGH. Glutamate 567 is a binding site for L-isoleucyl-5'-AMP. The short motif at 608-612 is the 'KMSKS' region element; the sequence is KMSKS. ATP is bound at residue lysine 611. Cysteine 912, cysteine 915, cysteine 932, and cysteine 935 together coordinate Zn(2+).

It belongs to the class-I aminoacyl-tRNA synthetase family. IleS type 1 subfamily. In terms of assembly, monomer. Requires Zn(2+) as cofactor.

It is found in the cytoplasm. The catalysed reaction is tRNA(Ile) + L-isoleucine + ATP = L-isoleucyl-tRNA(Ile) + AMP + diphosphate. Functionally, catalyzes the attachment of isoleucine to tRNA(Ile). As IleRS can inadvertently accommodate and process structurally similar amino acids such as valine, to avoid such errors it has two additional distinct tRNA(Ile)-dependent editing activities. One activity is designated as 'pretransfer' editing and involves the hydrolysis of activated Val-AMP. The other activity is designated 'posttransfer' editing and involves deacylation of mischarged Val-tRNA(Ile). This chain is Isoleucine--tRNA ligase, found in Vibrio cholerae serotype O1 (strain ATCC 39315 / El Tor Inaba N16961).